The chain runs to 842 residues: Leucine--tRNA ligase (842 aa).

The 'HIGH' region signature appears at 44-55 (PYPSANGLHVGH). Residues 619 to 623 (KMSKS) carry the 'KMSKS' region motif. Position 622 (lysine 622) interacts with ATP.

This sequence belongs to the class-I aminoacyl-tRNA synthetase family.

The protein localises to the cytoplasm. It carries out the reaction tRNA(Leu) + L-leucine + ATP = L-leucyl-tRNA(Leu) + AMP + diphosphate. The chain is Leucine--tRNA ligase from Borrelia hermsii (strain HS1 / DAH).